The primary structure comprises 126 residues: Aspartate 1-decarboxylase (126 aa).

Ser-25 acts as the Schiff-base intermediate with substrate; via pyruvic acid in catalysis. Ser-25 carries the post-translational modification Pyruvic acid (Ser). Thr-57 contributes to the substrate binding site. Catalysis depends on Tyr-58, which acts as the Proton donor. 73–75 is a substrate binding site; it reads GAA.

The protein belongs to the PanD family. Heterooctamer of four alpha and four beta subunits. Requires pyruvate as cofactor. In terms of processing, is synthesized initially as an inactive proenzyme, which is activated by self-cleavage at a specific serine bond to produce a beta-subunit with a hydroxyl group at its C-terminus and an alpha-subunit with a pyruvoyl group at its N-terminus.

Its subcellular location is the cytoplasm. The catalysed reaction is L-aspartate + H(+) = beta-alanine + CO2. Its pathway is cofactor biosynthesis; (R)-pantothenate biosynthesis; beta-alanine from L-aspartate: step 1/1. Functionally, catalyzes the pyruvoyl-dependent decarboxylation of aspartate to produce beta-alanine. This Escherichia coli O6:K15:H31 (strain 536 / UPEC) protein is Aspartate 1-decarboxylase.